The chain runs to 404 residues: Tryptophan synthase beta chain (404 aa).

Residue Lys98 is modified to N6-(pyridoxal phosphate)lysine.

The protein belongs to the TrpB family. As to quaternary structure, tetramer of two alpha and two beta chains. Pyridoxal 5'-phosphate serves as cofactor.

It carries out the reaction (1S,2R)-1-C-(indol-3-yl)glycerol 3-phosphate + L-serine = D-glyceraldehyde 3-phosphate + L-tryptophan + H2O. Its pathway is amino-acid biosynthesis; L-tryptophan biosynthesis; L-tryptophan from chorismate: step 5/5. Functionally, the beta subunit is responsible for the synthesis of L-tryptophan from indole and L-serine. This Acidiphilium cryptum (strain JF-5) protein is Tryptophan synthase beta chain.